Reading from the N-terminus, the 300-residue chain is Bifunctional protein FolD 2 (300 aa).

Residues 165 to 167 (GRS), Ser190, and Ile231 contribute to the NADP(+) site.

Belongs to the tetrahydrofolate dehydrogenase/cyclohydrolase family. Homodimer.

The catalysed reaction is (6R)-5,10-methylene-5,6,7,8-tetrahydrofolate + NADP(+) = (6R)-5,10-methenyltetrahydrofolate + NADPH. The enzyme catalyses (6R)-5,10-methenyltetrahydrofolate + H2O = (6R)-10-formyltetrahydrofolate + H(+). The protein operates within one-carbon metabolism; tetrahydrofolate interconversion. In terms of biological role, catalyzes the oxidation of 5,10-methylenetetrahydrofolate to 5,10-methenyltetrahydrofolate and then the hydrolysis of 5,10-methenyltetrahydrofolate to 10-formyltetrahydrofolate. In Pseudomonas syringae pv. tomato (strain ATCC BAA-871 / DC3000), this protein is Bifunctional protein FolD 2.